The chain runs to 310 residues: MRVIDSHTAGEPTRVVLDGGPDLGSGTLAERAARLEAEHLDFCASVVLEPRGHDAIIGALLVPPSDPACAAGVIYFNNLQNLGMCGHATIGLGVTLAHLGRIRPGRHRFETPVGVVEIDLIDANTVSVVNIESYRLAKDVTVEVEGVGPVTGDVAWGGNWFFLVKNSPIALTGANIRPLTDLTLKIRTALEKAGVTGKDGAWIDHIELFGPAEDPAAQSRNFVLCPGGAYDRSPCGTGCSAKLACLAADGALAPGQDYLQESVIGSTYKISYQPGPGGGVIPTITGQAFVTSDATLIFNPADPYRSGIRL.

The active-site Proton acceptor is C85. Substrate contacts are provided by residues 86–87 (GH), H205, and D231. The Proton donor role is filled by C235. Residue 236-237 (GT) coordinates substrate.

This sequence belongs to the proline racemase family.

It catalyses the reaction trans-4-hydroxy-L-proline = cis-4-hydroxy-D-proline. Catalyzes the epimerization of trans-4-hydroxy-L-proline (t4LHyp) to cis-4-hydroxy-D-proline (c4DHyp). May be involved in a degradation pathway of t4LHyp, which would allow L.aggregata to grow on t4LHyp as a sole carbon source. Displays no proline racemase activity. The chain is 4-hydroxyproline 2-epimerase from Roseibium aggregatum (strain ATCC 25650 / DSM 13394 / JCM 20685 / NBRC 16684 / NCIMB 2208 / IAM 12614 / B1) (Stappia aggregata).